Reading from the N-terminus, the 739-residue chain is Nucleoprotein (739 aa).

Positions Met-1–Leu-25 are oligomerization, N-terminal arm. The tract at residues Thr-26–Leu-405 is NP core. The interval Pro-415–Ser-647 is disordered. 2 stretches are compositionally biased toward low complexity: residues Ser-449–Val-458 and Lys-504–Gly-514. The short motif at Leu-562 to Glu-567 is the Host PPP2R5C-binding motif element. A compositionally biased stretch (acidic residues) spans Glu-567–Thr-579. The VP30-binding motif signature appears at Pro-606–Tyr-611. Residues Tyr-611 to Asp-638 are compositionally biased toward basic and acidic residues.

Belongs to the filoviruses nucleoprotein family. In terms of assembly, homooligomer. Homomultimerizes to form the nucleocapsid. Binds to viral genomic RNA. Interacts with VP35 and VP30 to form the nucleocapsid. Interacts with host PPP2R5C; this interaction leads to VP30 dephosphorylation and viral transcription. Interacts with VP24; this interaction facilitates nucleocapsid assembly and genome packaging. Interacts with matrix protein VP40; this interaction allows recruitment of the nucleocapsid into progeny virions. Interacts with host STAU1. Interacts with host NXF1 (via RNA-binding domain); this interaction recruits NXF1 to the inclusion bodies were viral replication takes place, probably to export viral mRNA-NXF1 complexes from these sites. Interacts with host CCDC92; this interaction sequesters NP in the host cytoplasm. Interacts with host TRIM14. Phosphorylated by host. In terms of processing, O-glycosylated by host. Post-translationally, acetylated by host EP300 in vitro.

The protein localises to the virion. The protein resides in the host cytoplasm. Its function is as follows. Oligomerizes into helical capsid to encapsidate the viral genome, protecting it from nucleases and the cellular innate immune response. VP35 binds to and stabilizes monomeric NP, keeping it soluble. Upon virus replication, NP is recruited to bind cooperatively viral genomic RNA and VP35 is released. The encapsidated genomic RNA is termed the nucleocapsid and serves as template for transcription and replication. The nucleocapsid is helical with a pitch of 10.81 NP per turn and a diameter of about 22nm. Each NP binds to six nucleotides of viral genomic RNA, three being exposed to the solvant and three hidden into the nucleocapsid. Also recruits host PPP2R5C phosphatase to dephosphorylate VP30 and thereby promote viral transcription. Upon virion assembly and budding, NP binds to VP24 and possibly host STAU1. The sequence is that of Nucleoprotein (NP) from Epomops franqueti (Franquet's epauletted fruit bat).